Reading from the N-terminus, the 399-residue chain is Cell division protein FtsZ (399 aa).

GTP is bound by residues 30-34 (GGGSN), 117-119 (GTG), E148, K152, and D196. Residues 349-368 (TLMSGNQNAPSGSYEQQDSS) are disordered. Residues 351–368 (MSGNQNAPSGSYEQQDSS) are compositionally biased toward polar residues.

It belongs to the FtsZ family. In terms of assembly, homodimer. Polymerizes to form a dynamic ring structure in a strictly GTP-dependent manner. Interacts directly with several other division proteins.

The protein localises to the cytoplasm. In terms of biological role, essential cell division protein that forms a contractile ring structure (Z ring) at the future cell division site. The regulation of the ring assembly controls the timing and the location of cell division. One of the functions of the FtsZ ring is to recruit other cell division proteins to the septum to produce a new cell wall between the dividing cells. Binds GTP and shows GTPase activity. This chain is Cell division protein FtsZ, found in Borreliella burgdorferi (strain ATCC 35210 / DSM 4680 / CIP 102532 / B31) (Borrelia burgdorferi).